The primary structure comprises 664 residues: E3 ubiquitin-protein ligase RNF139 (664 aa).

Ala2 carries the post-translational modification N-acetylalanine. Helical transmembrane passes span Ile51–Leu71, Ala85–Phe105, Ser125–Leu145, Leu154–Ile174, Leu178–Leu198, Gly293–Ile313, Leu323–Leu343, Met356–Met376, Phe390–Leu410, Leu420–Val440, Ser469–Phe489, and Ile495–Ala512. Residues Cys547–His586 form an RING-type; atypical zinc finger. Over residues Ser599–Pro610 the composition is skewed to polar residues. Residues Ser599–Asp664 form a disordered region. Residues Glu616–Glu628 show a composition bias toward basic and acidic residues. Over residues Leu629 to Asp639 the composition is skewed to acidic residues. The residue at position 634 (Ser634) is a Phosphoserine. Phosphothreonine occurs at positions 635 and 663.

As to quaternary structure, interacts with VHL. Interacts with MHC class I and HM13. Component of SCAP-SREBP complex composed of SREBF2, SCAP and RNF139; the complex hampers the interaction between SCAP and SEC24B, thereby reducing SREBF2 proteolytic processing. Interacts with SREBF2 (via C-terminal domain). Interacts with SCAP; the interaction inhibits the interaction of SCAP with SEC24B and hampering the ER to Golgi transport of the SCAP-SREBP complex. Interacts with SEC24B. Interacts with INSIG1 and INSIG2. Interacts with EIF3F and EIF3H; the interaction leads to protein translation inhibitions in a ubiquitination-dependent manner. Interacts with XBP1; the interaction induces ubiquitination and degradation of XBP1. Interacts with AUP1, AMFR and UBE2G2; interaction with AUP1 facilitates interaction of RNF139 with ubiquitin-conjugating enzyme UBE2G2 and ubiquitin ligase AMFR/gp78, leading to sterol-induced ubiquitination of HMGCR and its subsequent proteasomal degradation. In terms of processing, autoubiquitinated. Ubiquitination is induced by sterol and leads to ist degradation via the ubiquitin-proteasome pathway.

It is found in the endoplasmic reticulum membrane. It catalyses the reaction S-ubiquitinyl-[E2 ubiquitin-conjugating enzyme]-L-cysteine + [acceptor protein]-L-lysine = [E2 ubiquitin-conjugating enzyme]-L-cysteine + N(6)-ubiquitinyl-[acceptor protein]-L-lysine.. Its pathway is protein modification; protein ubiquitination. Functionally, E3-ubiquitin ligase; acts as a negative regulator of cell proliferation through mechanisms involving G2/M arrest and cell death. Required for MHC class I ubiquitination in cells expressing the cytomegalovirus protein US2 before dislocation from the endoplasmic reticulum (ER). Affects SREBP processing by hindering the SREBP-SCAP complex translocation from the ER to the Golgi, thereby reducing SREBF2 target gene expression. Involved in the sterol-accelerated degradation of HMGCR. This is achieved through binding to INSIG1 and/or INSIG2 at the ER membrane. In addition, interaction of RNF139 with AUP1 facilitates interaction of RNF139 with ubiquitin-conjugating enzyme UBE2G2 and ubiquitin ligase AMFR, leading to ubiquitination of HMGCR. The ubiquitinated HMGCR is then released from the ER by the complex into the cytosol for subsequent destruction. Required for INSIG1 ubiquitination. May be required for EIF3 complex ubiquitination. This Pongo abelii (Sumatran orangutan) protein is E3 ubiquitin-protein ligase RNF139 (RNF139).